Reading from the N-terminus, the 1129-residue chain is Eukaryotic translation initiation factor 3 subunit A (1129 aa).

The PCI domain maps to 319–502 (LQRMAAHVLL…NSIYFGTDLT (184 aa)). Disordered regions lie at residues 590 to 633 (NNAR…NEIQ) and 836 to 1129 (AAEA…VKRR). 5 stretches are compositionally biased toward basic and acidic residues: residues 836 to 903 (AAEA…RSER), 923 to 964 (DRND…KDTD), 971 to 985 (WRVR…RERG), 994 to 1044 (GRDD…DQPQ), and 1053 to 1076 (DSPR…RDIR). Residues 1080 to 1091 (PKEGGGGGGGGN) are compositionally biased toward gly residues. Basic and acidic residues predominate over residues 1098–1119 (PRDEKPPVKRDQPQDKENKAGD).

This sequence belongs to the eIF-3 subunit A family. Component of the eukaryotic translation initiation factor 3 (eIF-3) complex. The eIF-3 complex interacts with pix.

It is found in the cytoplasm. RNA-binding component of the eukaryotic translation initiation factor 3 (eIF-3) complex, which is involved in protein synthesis of a specialized repertoire of mRNAs and, together with other initiation factors, stimulates binding of mRNA and methionyl-tRNAi to the 40S ribosome. The eIF-3 complex specifically targets and initiates translation of a subset of mRNAs involved in cell proliferation. The polypeptide is Eukaryotic translation initiation factor 3 subunit A (Drosophila mojavensis (Fruit fly)).